The following is a 1219-amino-acid chain: FYVE, RhoGEF and PH domain-containing protein 5 (1219 aa).

4 disordered regions span residues 1-85 (MGSP…SCQI), 94-113 (EEDF…PTES), 201-227 (SDTQ…GQVP), and 310-367 (GRES…PSSV). Positions 23–50 (EVFEEDSADAAEGEDQIEQEEPPNCDEE) are enriched in acidic residues. Residues 201 to 214 (SDTQAASGTLSGYS) show a composition bias toward polar residues. The segment covering 319 to 337 (REPEGAGLDSHRVRRKEDN) has biased composition (basic and acidic residues). The span at 346–356 (SSGSFSQRSHL) shows a compositional bias: polar residues. Residues 357–367 (PSSGTSTPSSV) show a composition bias toward low complexity. T555 is modified (phosphothreonine). Low complexity predominate over residues 586-599 (ESKQQSSEQEAESA). Residues 586 to 644 (ESKQQSSEQEAESAYTEPYKVCPISAAPREDLTSDEEQGSSEEEDSASRDPSLSHKGEG) form a disordered region. A compositionally biased stretch (acidic residues) spans 618-630 (TSDEEQGSSEEED). The span at 631 to 644 (SASRDPSLSHKGEG) shows a compositional bias: basic and acidic residues. The DH domain maps to 647-840 (RALVIAQELL…SKVTDRANES (194 aa)). Residues 869–963 (EFLKEGTLMR…WHYCLSRALP (95 aa)) enclose the PH 1 domain. Residues 998–1057 (VTHAMMCMNCGCDFSLTVRRHHCHACGKIVCRNCSRNKYPLKCLKNRMAKVCDGCFRELK) form an FYVE-type zinc finger. Residues C1004, C1007, C1020, C1023, C1028, C1031, C1049, and C1052 each contribute to the Zn(2+) site. In terms of domain architecture, PH 2 spans 1120 to 1218 (GSAISGYLSR…WMEAMEDASV (99 aa)).

Expressed in highly vascularized tissues, such as lung, kidney and ovary.

It localises to the cytoplasm. Its subcellular location is the cytoskeleton. The protein resides in the cell projection. The protein localises to the ruffle membrane. It is found in the endoplasmic reticulum. It localises to the golgi apparatus. Its subcellular location is the early endosome. Activates CDC42, a member of the Ras-like family of Rho- and Rac proteins, by exchanging bound GDP for free GTP. Mediates VEGF-induced CDC42 activation. May regulate proangiogenic action of VEGF in vascular endothelial cells, including network formation, directional movement and proliferation. May play a role in regulating the actin cytoskeleton and cell shape. The polypeptide is FYVE, RhoGEF and PH domain-containing protein 5 (Fgd5) (Mus musculus (Mouse)).